The primary structure comprises 823 residues: MAFPHLQQPSFLLASLKADSINKPFAQRCQDLVKVIEDFPAKELHAVFPWLVESIFGSLDGVLVGWNLRCLQGRVNPVEYSTAMEFLDPSGPMMKLVYKLQAEDYNFDFPVSCLPGPVKASIQENVLPDSPLYHNKVQFPPTGGLGLNLALNPFEYYMFYFALSLISQKPMSMTLHVRTSDCAYFTLVDRYLSWFLPTEGSVPPPLCSSPGGSSPSPAPRTPAMPFASYGLHTSLLKRHISHQTSVNADPASHEIWRSETLLQVFVEMWLHHYSLEMYQKMQSPHAKLEVLHYRLTVSSALHSPAQPSLQALHAYQESFTPTEEHVLVVRLLLKHLHAFANSLKPDQASPSAHSHATSPLEEFKRAAVPRFVQQKLYVFLQHCFGHWPLDATFRAVLEMWLSYLQPWRYAPEKQAQGSDPQPRCVSEKWAPFIQENLLMYTKLFVSFLNRALRTDLVSPKNALMVFRVAKVFAQPNLAEMIQKGEQLFLEPELIIPHRQHRLFTVTTSFLSPWPPVVTDASFKVKSHVYSLEGQDCKYTPMFGPEIRTLVLRLAQLITQAKQTAKSISDQYVESPTGRSFLSWLTFGLTDTNSCYPANDLDEIGQDSIRKTDEYLEKALEYLRQIFRLSEAQLAQLTLALGSARDENGKQQLPDCIVGEEGLILTPLGRYQIINGLRRFEIEYQGDLELQPIRSYEITSLVRALFRLSSAINRRFAGQMAALCSRNDFLGSFCRYHLTEPALSNRHLLSPVGRRQVTNPARGPRLSLRFLGSYRTLLLLLMAFFVASLFCIGPLSCSLLLVLGYVLYAIAMTLLTERGKLHQL.

Residues Ser130 and Ser245 each carry the phosphoserine modification. Thr665 carries the post-translational modification Phosphothreonine. The residue at position 749 (Ser749) is a Phosphoserine. The chain crosses the membrane as a helical span at residues 776–796 (LLLLLMAFFVASLFCIGPLSC).

Mg(2+) is required as a cofactor. As to expression, expressed in skeletal muscle (at protein level). In terms of tissue distribution, expressed in skeletal muscle but a lower levels than isoform 1 (at protein level).

The protein resides in the endoplasmic reticulum membrane. It is found in the golgi apparatus membrane. It localises to the nucleus envelope. The protein localises to the cell membrane. Its subcellular location is the sarcolemma. It carries out the reaction a sphingomyelin + H2O = phosphocholine + an N-acylsphing-4-enine + H(+). Its activity is regulated as follows. Activated by phosphatidylserine and tumor necrosis factor (TNF). Inhibited by scyphostatin. Catalyzes the hydrolysis of membrane sphingomyelin to form phosphorylcholine and ceramide. It has a relevant role in the homeostasis of membrane sphingolipids, thereby influencing membrane integrity, and endoplasmic reticulum organization and function. May sensitize cells to DNA damage-induced apoptosis. In skeletal muscle, mediates TNF-stimulated oxidant production. The sequence is that of Sphingomyelin phosphodiesterase 4 (Smpd4) from Mus musculus (Mouse).